Reading from the N-terminus, the 283-residue chain is Thymidylate synthase (283 aa).

A dUMP-binding site is contributed by Arg-22. Cys-160 (nucleophile) is an active-site residue. Residues 180–183 (RSCD), Asn-191, and 221–223 (HIY) each bind dUMP. A (6R)-5,10-methylene-5,6,7,8-tetrahydrofolate-binding site is contributed by Asp-183. Ser-282 contacts (6R)-5,10-methylene-5,6,7,8-tetrahydrofolate.

The protein belongs to the thymidylate synthase family. Bacterial-type ThyA subfamily. In terms of assembly, homodimer.

The protein localises to the cytoplasm. It carries out the reaction dUMP + (6R)-5,10-methylene-5,6,7,8-tetrahydrofolate = 7,8-dihydrofolate + dTMP. It functions in the pathway pyrimidine metabolism; dTTP biosynthesis. Functionally, catalyzes the reductive methylation of 2'-deoxyuridine-5'-monophosphate (dUMP) to 2'-deoxythymidine-5'-monophosphate (dTMP) while utilizing 5,10-methylenetetrahydrofolate (mTHF) as the methyl donor and reductant in the reaction, yielding dihydrofolate (DHF) as a by-product. This enzymatic reaction provides an intracellular de novo source of dTMP, an essential precursor for DNA biosynthesis. In Pasteurella multocida (strain Pm70), this protein is Thymidylate synthase.